A 166-amino-acid polypeptide reads, in one-letter code: Crossover junction endodeoxyribonuclease RuvC (166 aa).

Catalysis depends on residues D9, E70, and D144. Mg(2+) is bound by residues D9, E70, and D144.

Belongs to the RuvC family. As to quaternary structure, homodimer which binds Holliday junction (HJ) DNA. The HJ becomes 2-fold symmetrical on binding to RuvC with unstacked arms; it has a different conformation from HJ DNA in complex with RuvA. In the full resolvosome a probable DNA-RuvA(4)-RuvB(12)-RuvC(2) complex forms which resolves the HJ. It depends on Mg(2+) as a cofactor.

It localises to the cytoplasm. It carries out the reaction Endonucleolytic cleavage at a junction such as a reciprocal single-stranded crossover between two homologous DNA duplexes (Holliday junction).. In terms of biological role, the RuvA-RuvB-RuvC complex processes Holliday junction (HJ) DNA during genetic recombination and DNA repair. Endonuclease that resolves HJ intermediates. Cleaves cruciform DNA by making single-stranded nicks across the HJ at symmetrical positions within the homologous arms, yielding a 5'-phosphate and a 3'-hydroxyl group; requires a central core of homology in the junction. The consensus cleavage sequence is 5'-(A/T)TT(C/G)-3'. Cleavage occurs on the 3'-side of the TT dinucleotide at the point of strand exchange. HJ branch migration catalyzed by RuvA-RuvB allows RuvC to scan DNA until it finds its consensus sequence, where it cleaves and resolves the cruciform DNA. This is Crossover junction endodeoxyribonuclease RuvC from Neorickettsia sennetsu (strain ATCC VR-367 / Miyayama) (Ehrlichia sennetsu).